We begin with the raw amino-acid sequence, 57 residues long: uncharacterized protein (57 aa).

Positions 9–45 form a coiled coil; sequence NWQEEIRKIIIERVRREAKKRLLEETRKLRMEMKSSK.

This is an uncharacterized protein from Archaeoglobus fulgidus (strain ATCC 49558 / DSM 4304 / JCM 9628 / NBRC 100126 / VC-16).